Here is a 63-residue protein sequence, read N- to C-terminus: Large ribosomal subunit protein uL29 (63 aa).

Belongs to the universal ribosomal protein uL29 family.

This is Large ribosomal subunit protein uL29 from Alteromonas mediterranea (strain DSM 17117 / CIP 110805 / LMG 28347 / Deep ecotype).